A 37-amino-acid polypeptide reads, in one-letter code: Large ribosomal subunit protein bL36c (37 aa).

It belongs to the bacterial ribosomal protein bL36 family.

The protein localises to the plastid. It localises to the chloroplast. The sequence is that of Large ribosomal subunit protein bL36c from Phalaenopsis aphrodite subsp. formosana (Moth orchid).